Reading from the N-terminus, the 275-residue chain is Large ribosomal subunit protein uL2 (275 aa).

The tract at residues 218-275 (RPQTRGSAMNPIDHPHGGGEGKTNSGRHPVSPWGMPTKGYKTRKKKASDKLIISKRKK) is disordered. Residues 257–275 (YKTRKKKASDKLIISKRKK) show a composition bias toward basic residues.

The protein belongs to the universal ribosomal protein uL2 family. As to quaternary structure, part of the 50S ribosomal subunit. Forms a bridge to the 30S subunit in the 70S ribosome.

Functionally, one of the primary rRNA binding proteins. Required for association of the 30S and 50S subunits to form the 70S ribosome, for tRNA binding and peptide bond formation. It has been suggested to have peptidyltransferase activity; this is somewhat controversial. Makes several contacts with the 16S rRNA in the 70S ribosome. The polypeptide is Large ribosomal subunit protein uL2 (Sulfurovum sp. (strain NBC37-1)).